Consider the following 607-residue polypeptide: Elongation factor 4 (607 aa).

One can recognise a tr-type G domain in the interval 11-193 (SKIRNFSIIA…QIVEKVPAPT (183 aa)). GTP is bound by residues 23–28 (DHGKST) and 140–143 (NKID).

The protein belongs to the TRAFAC class translation factor GTPase superfamily. Classic translation factor GTPase family. LepA subfamily.

The protein localises to the cell membrane. The catalysed reaction is GTP + H2O = GDP + phosphate + H(+). Required for accurate and efficient protein synthesis under certain stress conditions. May act as a fidelity factor of the translation reaction, by catalyzing a one-codon backward translocation of tRNAs on improperly translocated ribosomes. Back-translocation proceeds from a post-translocation (POST) complex to a pre-translocation (PRE) complex, thus giving elongation factor G a second chance to translocate the tRNAs correctly. Binds to ribosomes in a GTP-dependent manner. The sequence is that of Elongation factor 4 from Bacillus cereus (strain AH820).